A 55-amino-acid polypeptide reads, in one-letter code: ATP synthase F(0) complex subunit 8 (55 aa).

Residues 7–24 form a helical membrane-spanning segment; that stretch reads NPWFYIMLMSWLTFSLII. The tract at residues 35-55 is disordered; sequence NPPSNKTSTTTRTLPWTWPWT. Residues 41 to 55 are compositionally biased toward low complexity; sequence TSTTTRTLPWTWPWT.

The protein belongs to the ATPase protein 8 family. As to quaternary structure, component of the ATP synthase complex composed at least of ATP5F1A/subunit alpha, ATP5F1B/subunit beta, ATP5MC1/subunit c (homooctomer), MT-ATP6/subunit a, MT-ATP8/subunit 8, ATP5ME/subunit e, ATP5MF/subunit f, ATP5MG/subunit g, ATP5MK/subunit k, ATP5MJ/subunit j, ATP5F1C/subunit gamma, ATP5F1D/subunit delta, ATP5F1E/subunit epsilon, ATP5PF/subunit F6, ATP5PB/subunit b, ATP5PD/subunit d, ATP5PO/subunit OSCP. ATP synthase complex consists of a soluble F(1) head domain (subunits alpha(3) and beta(3)) - the catalytic core - and a membrane F(0) domain - the membrane proton channel (subunits c, a, 8, e, f, g, k and j). These two domains are linked by a central stalk (subunits gamma, delta, and epsilon) rotating inside the F1 region and a stationary peripheral stalk (subunits F6, b, d, and OSCP).

Its subcellular location is the mitochondrion membrane. In terms of biological role, subunit 8, of the mitochondrial membrane ATP synthase complex (F(1)F(0) ATP synthase or Complex V) that produces ATP from ADP in the presence of a proton gradient across the membrane which is generated by electron transport complexes of the respiratory chain. ATP synthase complex consist of a soluble F(1) head domain - the catalytic core - and a membrane F(1) domain - the membrane proton channel. These two domains are linked by a central stalk rotating inside the F(1) region and a stationary peripheral stalk. During catalysis, ATP synthesis in the catalytic domain of F(1) is coupled via a rotary mechanism of the central stalk subunits to proton translocation. In vivo, can only synthesize ATP although its ATP hydrolase activity can be activated artificially in vitro. Part of the complex F(0) domain. This Corythaixoides concolor (Grey go-away-bird) protein is ATP synthase F(0) complex subunit 8.